Reading from the N-terminus, the 143-residue chain is Large-conductance mechanosensitive channel (143 aa).

2 helical membrane-spanning segments follow: residues 10–30 and 89–109; these read FAVKGNVMDLAVGVIIGGAFS and GSFITVLINFIILAFIIFLMV.

It belongs to the MscL family. In terms of assembly, homopentamer.

The protein localises to the cell inner membrane. Its function is as follows. Channel that opens in response to stretch forces in the membrane lipid bilayer. May participate in the regulation of osmotic pressure changes within the cell. This chain is Large-conductance mechanosensitive channel, found in Burkholderia multivorans (strain ATCC 17616 / 249).